The sequence spans 1252 residues: DNA-directed RNA polymerase subunit beta (1252 aa).

It belongs to the RNA polymerase beta chain family. In terms of assembly, the RNAP catalytic core consists of 2 alpha, 1 beta, 1 beta' and 1 omega subunit. When a sigma factor is associated with the core the holoenzyme is formed, which can initiate transcription.

It carries out the reaction RNA(n) + a ribonucleoside 5'-triphosphate = RNA(n+1) + diphosphate. In terms of biological role, DNA-dependent RNA polymerase catalyzes the transcription of DNA into RNA using the four ribonucleoside triphosphates as substrates. The sequence is that of DNA-directed RNA polymerase subunit beta from Chlamydia abortus (strain DSM 27085 / S26/3) (Chlamydophila abortus).